A 150-amino-acid chain; its full sequence is D-galactose-binding lectin (150 aa).

His-16 and Gly-19 together coordinate D-galactose. The N-linked (GlcNAc...) asparagine glycan is linked to Asn-26. D-galactose contacts are provided by residues 35–37 (DIH), His-64, and Gly-67. The N-linked (GlcNAc...) asparagine glycan is linked to Asn-74. Residues 83–85 (DRH), His-108, and Gly-111 contribute to the D-galactose site. Asn-118 is a glycosylation site (N-linked (GlcNAc...) asparagine). 127–129 (DEH) serves as a coordination point for D-galactose.

Oligomerizes in solution. In terms of processing, the N-terminus is blocked. In terms of tissue distribution, expressed in mantle. Expressed 51 and 1.6 fold in mantle and gonads, respectively, relative to that in hemocytes. Expressed at a much lower level in other tissues tested including gill, muscle and hepatopancreas.

Hemagglutinating activity does not require Ca(2+) ions. Hemagglutinating activity is inhibited by porcine stomach mucin (PSM), bovine submaxillary mucin (BSM) and fetuin. Agglutination of V.proteolyticus bacteria is inhibited by D-galactose, but not by D-glucose. Fungal binding is inhibited by D-galactose, but not by pathogen-associated molecular patterns (PAMPs) including lipopolysaccharide (LPS), peptidoglycan and beta-glucan. Functionally, D-galactose-binding lectin. Binds both alpha and beta anomer of galactose (Gal). Binds strongly to branched beta-Gal-terminated glycans and weakly to unbranched glycans with alpha-Gal on the end of chains. Has strong affinity for both Gal and GalNAc. Binds glycoproteins containing mucin-type chains. Has hemagglutinating activity towards human group A erythrocytes. Has hemagglutinating activity towards rabbit erythrocytes. Agglutinates V.proteolyticus bacteria. Binds strongly to fungi including species from genera Aspergillus, Alternaria, Fusarium and Haematonectria, and to a lesser extent to fungi from genera Trichoderma. Decreases conidia germination and hyphal growth of fungi. At high concentration, stimulates secretion of cytokines TNF-alpha and IFN-gamma from human peripheral blood cells, and at low concentration reduces hyperexpression of cytokine IL-10 in these cells, indicative of immunomodulatory capability. However, has no effect on IL-4 production. Recognizes pathogen-associated molecular patterns (PAMPs) and binds to peptidoglycan from S.aureus, but has only little binding to beta-1,3-glucan from E.gracilis and lipopolysaccharide (LPS) from E.coli. May be involved in innate immunity acting as an antibacterial or antifungal agent recognizing carbohydrate ligands on the surface of pathogens. This is D-galactose-binding lectin from Mytilus trossulus (Blue mussel).